Reading from the N-terminus, the 473-residue chain is Probable acid phosphatase DDB_G0284755 (473 aa).

The active-site Nucleophile is the His-94. The active-site Proton donor is the Asp-359.

This sequence belongs to the histidine acid phosphatase family.

It catalyses the reaction a phosphate monoester + H2O = an alcohol + phosphate. The protein is Probable acid phosphatase DDB_G0284755 of Dictyostelium discoideum (Social amoeba).